We begin with the raw amino-acid sequence, 300 residues long: Succinate--CoA ligase [ADP-forming] subunit alpha (300 aa).

CoA contacts are provided by residues 17-20 (TGST), K43, and 96-98 (ITE). Y159 is a binding site for substrate. The active-site Tele-phosphohistidine intermediate is the H247.

The protein belongs to the succinate/malate CoA ligase alpha subunit family. In terms of assembly, heterotetramer of two alpha and two beta subunits.

The enzyme catalyses succinate + ATP + CoA = succinyl-CoA + ADP + phosphate. It carries out the reaction GTP + succinate + CoA = succinyl-CoA + GDP + phosphate. The protein operates within carbohydrate metabolism; tricarboxylic acid cycle; succinate from succinyl-CoA (ligase route): step 1/1. Succinyl-CoA synthetase functions in the citric acid cycle (TCA), coupling the hydrolysis of succinyl-CoA to the synthesis of either ATP or GTP and thus represents the only step of substrate-level phosphorylation in the TCA. The alpha subunit of the enzyme binds the substrates coenzyme A and phosphate, while succinate binding and nucleotide specificity is provided by the beta subunit. In Bacillus subtilis (strain 168), this protein is Succinate--CoA ligase [ADP-forming] subunit alpha.